An 892-amino-acid polypeptide reads, in one-letter code: Histone deacetylase 4 (892 aa).

Positions 145 to 225 (NGNLSNLSVP…MSNVNGHDNS (81 aa)) are disordered. Polar residues-rich tracts occupy residues 171-192 (SAPT…ISQL) and 208-222 (ESNS…VNGH). The tract at residues 481–822 (STGLGYDPLM…VQALIGESDD (342 aa)) is histone deacetylase. Residue His-628 is part of the active site.

The protein belongs to the histone deacetylase family. HD type 2 subfamily.

It localises to the nucleus. The catalysed reaction is N(6)-acetyl-L-lysyl-[histone] + H2O = L-lysyl-[histone] + acetate. Functionally, responsible for the deacetylation of lysine residues on the N-terminal part of the core histones (H2A, H2B, H3 and H4). Histone deacetylation gives a tag for epigenetic repression and plays an important role in transcriptional regulation, cell cycle progression and developmental events. Histone deacetylases act via the formation of large multiprotein complexes. This chain is Histone deacetylase 4 (hda-4), found in Caenorhabditis briggsae.